We begin with the raw amino-acid sequence, 280 residues long: 4-diphosphocytidyl-2-C-methyl-D-erythritol kinase (280 aa).

K8 is a catalytic residue. Residue 91–101 coordinates ATP; it reads PVSAGLAGGST. D133 is a catalytic residue.

This sequence belongs to the GHMP kinase family. IspE subfamily.

It carries out the reaction 4-CDP-2-C-methyl-D-erythritol + ATP = 4-CDP-2-C-methyl-D-erythritol 2-phosphate + ADP + H(+). The protein operates within isoprenoid biosynthesis; isopentenyl diphosphate biosynthesis via DXP pathway; isopentenyl diphosphate from 1-deoxy-D-xylulose 5-phosphate: step 3/6. Catalyzes the phosphorylation of the position 2 hydroxy group of 4-diphosphocytidyl-2C-methyl-D-erythritol. In Clostridium beijerinckii (strain ATCC 51743 / NCIMB 8052) (Clostridium acetobutylicum), this protein is 4-diphosphocytidyl-2-C-methyl-D-erythritol kinase.